The sequence spans 120 residues: MVNRNPKRSDEPVWWGLFGAGGTWFAMLTPVTILVLGILVPLGVIGPESMNYLRVAGFVTSIIGALFVIGSISMPMWHAMHRLHHGMHDLKFHTGTAGKIACYAAAALATVLSVVFIFMI.

The next 3 helical transmembrane spans lie at 25–45, 55–75, and 100–120; these read FAMLTPVTILVLGILVPLGVI, VAGFVTSIIGALFVIGSISMP, and IACYAAAALATVLSVVFIFMI.

This sequence belongs to the FrdD family. In terms of assembly, part of an enzyme complex containing four subunits: a flavoprotein (FrdA), an iron-sulfur protein (FrdB), and two hydrophobic anchor proteins (FrdC and FrdD).

It localises to the cell inner membrane. Functionally, anchors the catalytic components of the fumarate reductase complex to the cell membrane, binds quinones. The protein is Fumarate reductase subunit D of Aliivibrio fischeri (strain MJ11) (Vibrio fischeri).